A 1379-amino-acid polypeptide reads, in one-letter code: DNA-directed RNA polymerase subunit beta (1379 aa).

It belongs to the RNA polymerase beta chain family. In terms of assembly, the RNAP catalytic core consists of 2 alpha, 1 beta, 1 beta' and 1 omega subunit. When a sigma factor is associated with the core the holoenzyme is formed, which can initiate transcription.

It carries out the reaction RNA(n) + a ribonucleoside 5'-triphosphate = RNA(n+1) + diphosphate. In terms of biological role, DNA-dependent RNA polymerase catalyzes the transcription of DNA into RNA using the four ribonucleoside triphosphates as substrates. The protein is DNA-directed RNA polymerase subunit beta of Campylobacter fetus subsp. fetus (strain 82-40).